The sequence spans 232 residues: Lipid A 1-phosphatase (232 aa).

Transmembrane regions (helical) follow at residues 10-30 (LFIT…PVGA), 42-62 (ELLT…LLFF), 80-100 (ALYV…SGLL), 136-156 (FPSG…LLFP), 160-180 (VAFI…GAHY), and 183-203 (DVIA…IVYA).

It belongs to the lipid A LpxE 1-phosphatase family.

Its subcellular location is the cell inner membrane. The protein operates within bacterial outer membrane biogenesis; LPS lipid A biosynthesis. In terms of biological role, probably removes the 1-phosphate moiety from lipid A species. Does not seem to act on other membrane components, nor does it dephosphorylate the 4'-phosphate group of lipid A and/or lipid A precursors. The polypeptide is Lipid A 1-phosphatase (Rhizobium etli (strain ATCC 51251 / DSM 11541 / JCM 21823 / NBRC 15573 / CFN 42)).